Consider the following 472-residue polypeptide: Pyruvate kinase (472 aa).

Position 33 (Arg-33) interacts with substrate. K(+) is bound by residues Asn-35, Ser-37, and Asp-67. Position 35 to 38 (35 to 38 (NFSH)) interacts with ATP. Positions 74 and 155 each coordinate ATP. Glu-220 provides a ligand contact to Mg(2+). Residues Gly-243, Asp-244, and Thr-276 each contribute to the substrate site. Residue Asp-244 participates in Mg(2+) binding.

It belongs to the pyruvate kinase family. As to quaternary structure, homotetramer. Mg(2+) serves as cofactor. It depends on K(+) as a cofactor.

The catalysed reaction is pyruvate + ATP = phosphoenolpyruvate + ADP + H(+). The protein operates within carbohydrate degradation; glycolysis; pyruvate from D-glyceraldehyde 3-phosphate: step 5/5. This is Pyruvate kinase (pyk) from Mycobacterium tuberculosis (strain CDC 1551 / Oshkosh).